The following is a 354-amino-acid chain: Uroporphyrinogen decarboxylase (354 aa).

Residues 27–31 (RQAGR), D77, Y154, T209, and H327 each bind substrate.

The protein belongs to the uroporphyrinogen decarboxylase family. As to quaternary structure, homodimer.

Its subcellular location is the cytoplasm. The catalysed reaction is uroporphyrinogen III + 4 H(+) = coproporphyrinogen III + 4 CO2. Its pathway is porphyrin-containing compound metabolism; protoporphyrin-IX biosynthesis; coproporphyrinogen-III from 5-aminolevulinate: step 4/4. Catalyzes the decarboxylation of four acetate groups of uroporphyrinogen-III to yield coproporphyrinogen-III. This chain is Uroporphyrinogen decarboxylase, found in Escherichia coli O7:K1 (strain IAI39 / ExPEC).